The primary structure comprises 650 residues: Kinesin-like protein KIF22-B (650 aa).

The Kinesin motor domain maps to 31–359 (RVRVAVRLRP…LNFAAKSKQI (329 aa)). Residue 116–123 (GPTGAGKT) coordinates ATP. The tract at residues 365–416 (SRETTQTVAQPAMKRPREEAEATTSSRQRKKSKTDSTESSPNSSMESTGKRK) is disordered. A compositionally biased stretch (low complexity) spans 401–411 (TESSPNSSMES). The stretch at 452-498 (KRERMALLKKWEESQMEIERLKEKQKELEQKAMEAEARLEKSNNSDL) forms a coiled coil. An Important for regulated proteolytic degradation motif is present at residues 560 to 563 (GHEN).

It belongs to the TRAFAC class myosin-kinesin ATPase superfamily. Kinesin family. Post-translationally, ubiquitinated, leading to its subsequent proteasomal degradation.

It is found in the nucleus. The protein resides in the cytoplasm. It localises to the cytoskeleton. In terms of biological role, kinesin family member that is involved in spindle formation and the movements of chromosomes during mitosis and meiosis. Binds to microtubules and to DNA. The chain is Kinesin-like protein KIF22-B (kif22-b) from Xenopus laevis (African clawed frog).